A 374-amino-acid polypeptide reads, in one-letter code: Carbamoyl phosphate synthase small chain (374 aa).

A CPSase region spans residues 1–183; that stretch reads MVLADGQMIW…QNGYSVVDNQ (183 aa). L-glutamine is bound by residues S41, G235, and G237. Positions 187-374 constitute a Glutamine amidotransferase type-1 domain; that stretch reads HVVAIDYGLK…FIDLIAKERP (188 aa). C264 serves as the catalytic Nucleophile. The L-glutamine site is built by L265, Q268, N306, G308, and F309. Residues H348 and E350 contribute to the active site.

The protein belongs to the CarA family. Composed of two chains; the small (or glutamine) chain promotes the hydrolysis of glutamine to ammonia, which is used by the large (or ammonia) chain to synthesize carbamoyl phosphate. Tetramer of heterodimers (alpha,beta)4.

The enzyme catalyses hydrogencarbonate + L-glutamine + 2 ATP + H2O = carbamoyl phosphate + L-glutamate + 2 ADP + phosphate + 2 H(+). It catalyses the reaction L-glutamine + H2O = L-glutamate + NH4(+). It participates in amino-acid biosynthesis; L-arginine biosynthesis; carbamoyl phosphate from bicarbonate: step 1/1. It functions in the pathway pyrimidine metabolism; UMP biosynthesis via de novo pathway; (S)-dihydroorotate from bicarbonate: step 1/3. Its function is as follows. Small subunit of the glutamine-dependent carbamoyl phosphate synthetase (CPSase). CPSase catalyzes the formation of carbamoyl phosphate from the ammonia moiety of glutamine, carbonate, and phosphate donated by ATP, constituting the first step of 2 biosynthetic pathways, one leading to arginine and/or urea and the other to pyrimidine nucleotides. The small subunit (glutamine amidotransferase) binds and cleaves glutamine to supply the large subunit with the substrate ammonia. This is Carbamoyl phosphate synthase small chain from Zymomonas mobilis subsp. mobilis (strain ATCC 31821 / ZM4 / CP4).